We begin with the raw amino-acid sequence, 90 residues long: Probable Fe(2+)-trafficking protein (90 aa).

It belongs to the Fe(2+)-trafficking protein family.

Could be a mediator in iron transactions between iron acquisition and iron-requiring processes, such as synthesis and/or repair of Fe-S clusters in biosynthetic enzymes. The protein is Probable Fe(2+)-trafficking protein of Nitrosomonas europaea (strain ATCC 19718 / CIP 103999 / KCTC 2705 / NBRC 14298).